A 321-amino-acid polypeptide reads, in one-letter code: uncharacterized protein (321 aa).

Residues methionine 1–lysine 12 show a composition bias toward basic residues. Disordered stretches follow at residues methionine 1–threonine 59 and glutamate 71–aspartate 289. A compositionally biased stretch (basic and acidic residues) spans aspartate 50–threonine 59. Acidic residues predominate over residues aspartate 99–glutamate 115. A compositionally biased stretch (low complexity) spans serine 156–aspartate 175. A compositionally biased stretch (basic and acidic residues) spans aspartate 179 to isoleucine 189. Residues glutamate 231–alanine 242 are compositionally biased toward low complexity.

This is an uncharacterized protein from Equus caballus (Horse).